The chain runs to 119 residues: Small ribosomal subunit protein bS16 (119 aa).

Belongs to the bacterial ribosomal protein bS16 family.

The polypeptide is Small ribosomal subunit protein bS16 (Chlamydia felis (strain Fe/C-56) (Chlamydophila felis)).